The following is a 159-amino-acid chain: Phosphopantetheine adenylyltransferase (159 aa).

Position 10 (T10) interacts with substrate. ATP is bound by residues 10 to 11 and H18; that span reads TF. Positions 42, 74, and 88 each coordinate substrate. ATP contacts are provided by residues 89 to 91, E99, and 124 to 130; these read GLR and WSFISSS.

Belongs to the bacterial CoaD family. Homohexamer. Requires Mg(2+) as cofactor.

It localises to the cytoplasm. It catalyses the reaction (R)-4'-phosphopantetheine + ATP + H(+) = 3'-dephospho-CoA + diphosphate. It functions in the pathway cofactor biosynthesis; coenzyme A biosynthesis; CoA from (R)-pantothenate: step 4/5. Its function is as follows. Reversibly transfers an adenylyl group from ATP to 4'-phosphopantetheine, yielding dephospho-CoA (dPCoA) and pyrophosphate. This chain is Phosphopantetheine adenylyltransferase, found in Cronobacter sakazakii (strain ATCC BAA-894) (Enterobacter sakazakii).